The following is a 717-amino-acid chain: Methionine--tRNA ligase (717 aa).

The short motif at 19–29 is the 'HIGH' region element; it reads PYANGDLHVGH. Residues Cys-150, Cys-153, Cys-162, and Cys-166 each contribute to the Zn(2+) site. Residues 356–360 carry the 'KMSKS' region motif; that stretch reads ALSTS. Residue Thr-359 coordinates ATP. The disordered stretch occupies residues 573-603; it reads ERVEEASEASAEASNEGGEAAGDEVDDGDVD. A compositionally biased stretch (low complexity) spans 580 to 590; sequence EASAEASNEGG. Acidic residues predominate over residues 593–603; that stretch reads AGDEVDDGDVD. The 99-residue stretch at 619 to 717 folds into the tRNA-binding domain; that stretch reads DFEGVDMRVG…EDAPLGTRIK (99 aa).

The protein belongs to the class-I aminoacyl-tRNA synthetase family. MetG type 1 subfamily. In terms of assembly, homodimer. It depends on Zn(2+) as a cofactor.

The protein resides in the cytoplasm. It carries out the reaction tRNA(Met) + L-methionine + ATP = L-methionyl-tRNA(Met) + AMP + diphosphate. Its function is as follows. Is required not only for elongation of protein synthesis but also for the initiation of all mRNA translation through initiator tRNA(fMet) aminoacylation. The chain is Methionine--tRNA ligase from Haloarcula marismortui (strain ATCC 43049 / DSM 3752 / JCM 8966 / VKM B-1809) (Halobacterium marismortui).